A 258-amino-acid polypeptide reads, in one-letter code: Phosphate import ATP-binding protein PstB (258 aa).

The 242-residue stretch at 12-253 (IEVKNLNFYY…PARKETEDYI (242 aa)) folds into the ABC transporter domain. 44 to 51 (GPSGCGKS) is a binding site for ATP.

This sequence belongs to the ABC transporter superfamily. Phosphate importer (TC 3.A.1.7) family. The complex is composed of two ATP-binding proteins (PstB), two transmembrane proteins (PstC and PstA) and a solute-binding protein (PstS).

The protein resides in the cell inner membrane. It catalyses the reaction phosphate(out) + ATP + H2O = ADP + 2 phosphate(in) + H(+). In terms of biological role, part of the ABC transporter complex PstSACB involved in phosphate import. Responsible for energy coupling to the transport system. The sequence is that of Phosphate import ATP-binding protein PstB from Bordetella avium (strain 197N).